The chain runs to 532 residues: Deoxyribodipyrimidine photo-lyase (532 aa).

Residues 1–57 form a disordered region; that stretch reads MDSKKRSHSTGGEAENMESQESKAKRKPLQKHQFSKSNVVQKEEKDKTEGEEKGAEG. Basic residues predominate over residues 24–34; that stretch reads AKRKPLQKHQF. Residues 41–55 show a composition bias toward basic and acidic residues; that stretch reads QKEEKDKTEGEEKGA. Residues 97-229 enclose the Photolyase/cryptochrome alpha/beta domain; that stretch reads QAFVYWMSRD…QVDAHNIVPC (133 aa). DNA is bound at residue R322. Interaction with DNA stretches follow at residues 368–376 and 442–443; these read EAVVRRELA and GF. Residue 468 to 470 participates in FAD binding; that stretch reads YLN.

Belongs to the DNA photolyase class-2 family. Requires FAD as cofactor.

The catalysed reaction is cyclobutadipyrimidine (in DNA) = 2 pyrimidine residues (in DNA).. In terms of biological role, involved in repair of UV radiation-induced DNA damage. Catalyzes the light-dependent monomerization (300-600 nm) of cyclobutyl pyrimidine dimers (in cis-syn configuration), which are formed between adjacent bases on the same DNA strand upon exposure to ultraviolet radiation. The polypeptide is Deoxyribodipyrimidine photo-lyase (PHR) (Potorous tridactylus (Potoroo)).